Reading from the N-terminus, the 1263-residue chain is DNA-directed RNA polymerase subunit beta (1263 aa).

The protein belongs to the RNA polymerase beta chain family. As to quaternary structure, the RNAP catalytic core consists of 2 alpha, 1 beta, 1 beta' and 1 omega subunit. When a sigma factor is associated with the core the holoenzyme is formed, which can initiate transcription.

The enzyme catalyses RNA(n) + a ribonucleoside 5'-triphosphate = RNA(n+1) + diphosphate. Functionally, DNA-dependent RNA polymerase catalyzes the transcription of DNA into RNA using the four ribonucleoside triphosphates as substrates. This chain is DNA-directed RNA polymerase subunit beta, found in Thermotoga maritima (strain ATCC 43589 / DSM 3109 / JCM 10099 / NBRC 100826 / MSB8).